The chain runs to 93 residues: Alpha-defensin 24 (93 aa).

An N-terminal signal peptide occupies residues 1–19; sequence MKTLILLSALVLLAFQVQA. Positions 20-58 are excised as a propeptide; the sequence is DPIQNTDEETKTEEQPGEEDQAVSVSFGDPEGASLQEES. A disordered region spans residues 23–54; the sequence is QNTDEETKTEEQPGEEDQAVSVSFGDPEGASL. 3 disulfides stabilise this stretch: Cys64/Cys92, Cys66/Cys81, and Cys71/Cys91.

The protein belongs to the alpha-defensin family.

Its subcellular location is the secreted. In terms of biological role, may have microbicidal activities. The protein is Alpha-defensin 24 (Defa24) of Mus musculus (Mouse).